Reading from the N-terminus, the 471-residue chain is Trigger factor (471 aa).

Positions 169–254 (EDRVTIDYLG…VKEVAKPNEL (86 aa)) constitute a PPIase FKBP-type domain. The tract at residues 435-471 (VSKEELTAEDEDAASEAKPAKKAAAKKKAEEGKSEEA) is disordered. Positions 461–471 (KKAEEGKSEEA) are enriched in basic and acidic residues.

Belongs to the FKBP-type PPIase family. Tig subfamily.

The protein resides in the cytoplasm. The enzyme catalyses [protein]-peptidylproline (omega=180) = [protein]-peptidylproline (omega=0). In terms of biological role, involved in protein export. Acts as a chaperone by maintaining the newly synthesized protein in an open conformation. Functions as a peptidyl-prolyl cis-trans isomerase. In Brucella abortus (strain S19), this protein is Trigger factor.